A 331-amino-acid chain; its full sequence is Ornithine carbamoyltransferase (331 aa).

Carbamoyl phosphate is bound by residues 57–60, Q82, R106, and 133–136; these read STRT and HPTQ. Residues N166, D230, and 234 to 235 each bind L-ornithine; that span reads SM. Carbamoyl phosphate contacts are provided by residues 272 to 273 and R317; that span reads CL.

It belongs to the aspartate/ornithine carbamoyltransferase superfamily. OTCase family.

It localises to the cytoplasm. The enzyme catalyses carbamoyl phosphate + L-ornithine = L-citrulline + phosphate + H(+). It participates in amino-acid degradation; L-arginine degradation via ADI pathway; carbamoyl phosphate from L-arginine: step 2/2. Its function is as follows. Reversibly catalyzes the transfer of the carbamoyl group from carbamoyl phosphate (CP) to the N(epsilon) atom of ornithine (ORN) to produce L-citrulline. The chain is Ornithine carbamoyltransferase from Clostridium perfringens (strain SM101 / Type A).